The following is a 596-amino-acid chain: ATP-dependent lipid A-core flippase (596 aa).

A run of 6 helical transmembrane segments spans residues 34 to 54, 80 to 100, 138 to 158, 164 to 184, 263 to 283, and 292 to 312; these read VWVL…EAGI, AAVV…GYLL, AVVF…ITLV, VVFL…IVAI, QPLT…IAVV, and VGGF…LKHL. The 284-residue stretch at 38-321 folds into the ABC transmembrane type-1 domain; that stretch reads VAGVLAMAAV…LMDVNQPLQR (284 aa). An ABC transporter domain is found at 353-589; sequence IEFSHVSFSY…GGLYAHLHRI (237 aa). Position 389–396 (389–396) interacts with ATP; it reads GPSGSGKT.

The protein belongs to the ABC transporter superfamily. Lipid exporter (TC 3.A.1.106) family. Homodimer.

It is found in the cell inner membrane. The catalysed reaction is ATP + H2O + lipid A-core oligosaccharideSide 1 = ADP + phosphate + lipid A-core oligosaccharideSide 2.. Functionally, involved in lipopolysaccharide (LPS) biosynthesis. Translocates lipid A-core from the inner to the outer leaflet of the inner membrane. Transmembrane domains (TMD) form a pore in the inner membrane and the ATP-binding domain (NBD) is responsible for energy generation. This chain is ATP-dependent lipid A-core flippase, found in Burkholderia mallei (strain ATCC 23344).